We begin with the raw amino-acid sequence, 159 residues long: Ribosomal RNA large subunit methyltransferase H (159 aa).

Residues L76, G108, and 127–132 each bind S-adenosyl-L-methionine; that span reads FSKMTF.

Belongs to the RNA methyltransferase RlmH family. Homodimer.

It is found in the cytoplasm. It carries out the reaction pseudouridine(1915) in 23S rRNA + S-adenosyl-L-methionine = N(3)-methylpseudouridine(1915) in 23S rRNA + S-adenosyl-L-homocysteine + H(+). Its function is as follows. Specifically methylates the pseudouridine at position 1915 (m3Psi1915) in 23S rRNA. This is Ribosomal RNA large subunit methyltransferase H from Clostridium botulinum (strain Kyoto / Type A2).